The following is a 392-amino-acid chain: 23S rRNA (uracil(747)-C(5))-methyltransferase RlmC (392 aa).

Residues Cys4, Cys12, Cys15, and Cys93 each coordinate [4Fe-4S] cluster. S-adenosyl-L-methionine is bound by residues Gln218, Phe247, Glu275, and Asn321. Cys348 (nucleophile) is an active-site residue.

This sequence belongs to the class I-like SAM-binding methyltransferase superfamily. RNA M5U methyltransferase family. RlmC subfamily.

The catalysed reaction is uridine(747) in 23S rRNA + S-adenosyl-L-methionine = 5-methyluridine(747) in 23S rRNA + S-adenosyl-L-homocysteine + H(+). Functionally, catalyzes the formation of 5-methyl-uridine at position 747 (m5U747) in 23S rRNA. This chain is 23S rRNA (uracil(747)-C(5))-methyltransferase RlmC, found in Haemophilus influenzae (strain 86-028NP).